The chain runs to 203 residues: Cryptic neisserial protein 1 (203 aa).

The first 18 residues, 1-18 (MRRAILLILTLTVGTSLA), serve as a signal peptide directing secretion.

Belongs to the Cnp family.

Its subcellular location is the periplasm. It is found in the cytoplasm. In Neisseria gonorrhoeae (strain ATCC 700825 / FA 1090), this protein is Cryptic neisserial protein 1.